A 261-amino-acid chain; its full sequence is Type III pantothenate kinase (261 aa).

6 to 13 contributes to the ATP binding site; sequence DVGNTNTV. 107–110 is a substrate binding site; it reads GADR. The active-site Proton acceptor is aspartate 109. Aspartate 129 is a K(+) binding site. Residue threonine 132 participates in ATP binding. Residue threonine 183 participates in substrate binding.

The protein belongs to the type III pantothenate kinase family. In terms of assembly, homodimer. Requires NH4(+) as cofactor. It depends on K(+) as a cofactor.

Its subcellular location is the cytoplasm. The catalysed reaction is (R)-pantothenate + ATP = (R)-4'-phosphopantothenate + ADP + H(+). It participates in cofactor biosynthesis; coenzyme A biosynthesis; CoA from (R)-pantothenate: step 1/5. In terms of biological role, catalyzes the phosphorylation of pantothenate (Pan), the first step in CoA biosynthesis. The chain is Type III pantothenate kinase from Kosmotoga olearia (strain ATCC BAA-1733 / DSM 21960 / TBF 19.5.1).